Here is a 272-residue protein sequence, read N- to C-terminus: Transcription factor E2F6 (272 aa).

The binding to corepressors stretch occupies residues 1-62 (MSQQRTARRQ…MRKALKVKRP (62 aa)). Residues 50–129 (YVSMRKALKV…SKNHIRWIGS (80 aa)) mediate DNA binding. Residues 95–129 (KLGVRKRRVYDITNVLDGIELVEKKSKNHIRWIGS) carry the DEF box motif. Residues 130-222 (DLNNFGAAPQ…PAPREDSITV (93 aa)) are dimerization. Residues 143–164 (LQAELSDLSAMEDALDELIKDC) are leucine-zipper. A transcription repression region spans residues 173 to 272 (DDKENERLAY…CPEKEDEPPQ (100 aa)). Residues 242–272 (HSNGKTNDGIGASPSKSSHPQCPEKEDEPPQ) form a disordered region.

This sequence belongs to the E2F/DP family. In terms of assembly, forms heterodimers with DP family members TFDP1 or TFDP2. Component of the DRTF1/E2F transcription factor complex. Part of the E2F6.com-1 complex in G0 phase composed of E2F6, MGA, MAX, TFDP1, CBX3, BAT8, EUHMTASE1, RING1, RNF2, MBLR, L3MBTL2 and YAF2. Component of some MLL1/MLL complex, at least composed of the core components KMT2A/MLL1, ASH2L, HCFC1/HCF1, WDR5 and RBBP5, as well as the facultative components BACC1, CHD8, E2F6, HSP70, INO80C, KANSL1, LAS1L, MAX, MCRS1, MGA, KAT8/MOF, PELP1, PHF20, PRP31, RING2, RUVB1/TIP49A, RUVB2/TIP49B, SENP3, TAF1, TAF4, TAF6, TAF7, TAF9 and TEX10.

Its subcellular location is the nucleus. In terms of biological role, inhibitor of E2F-dependent transcription. Binds DNA cooperatively with DP proteins through the E2 recognition site, 5'-TTTC[CG]CGC-3'. Has a preference for the 5'-TTTCCCGC-3' E2F recognition site. E2F6 lacks the transcriptional activation and pocket protein binding domains. Appears to regulate a subset of E2F-dependent genes whose products are required for entry into the cell cycle but not for normal cell cycle progression. Represses expression of some meiosis-specific genes, including SLC25A31/ANT4. May silence expression via the recruitment of a chromatin remodeling complex containing histone H3-K9 methyltransferase activity. Overexpression delays the exit of cells from the S-phase. The chain is Transcription factor E2F6 from Mus musculus (Mouse).